Consider the following 244-residue polypeptide: Probable transcriptional regulatory protein Xfasm12_1059 (244 aa).

Belongs to the TACO1 family.

The protein localises to the cytoplasm. The protein is Probable transcriptional regulatory protein Xfasm12_1059 of Xylella fastidiosa (strain M12).